Here is a 1482-residue protein sequence, read N- to C-terminus: Glutamate receptor ionotropic, NMDA 2B (1482 aa).

The N-terminal stretch at 1–26 (MKPSAECCSPKFWLVLAVLAVSGSKA) is a signal peptide. At 27–557 (RSQKSAPSIG…SAFLEPFSAD (531 aa)) the chain is on the extracellular side. N-linked (GlcNAc...) asparagine glycosylation occurs at Asn-74. An intrachain disulfide couples Cys-86 to Cys-321. His-127 and Glu-284 together coordinate Zn(2+). 4 N-linked (GlcNAc...) asparagine glycosylation sites follow: Asn-341, Asn-348, Asn-444, and Asn-491. Intrachain disulfides connect Cys-429-Cys-456 and Cys-436-Cys-457. 2 residues coordinate L-glutamate: Thr-514 and Arg-519. Residue Asn-542 is glycosylated (N-linked (GlcNAc...) asparagine). Residues 558–576 (VWVMMFVMLLIVSAVAVFV) form a helical membrane-spanning segment. The Cytoplasmic segment spans residues 577–603 (FEYFSPVGYNRCLADGREPGGPSFTIG). Positions 604 to 623 (KAIWLLWGLVFNNSVPVQNP) form an intramembrane region, discontinuously helical. A pore-forming region spans residues 604–623 (KAIWLLWGLVFNNSVPVQNP). The Cytoplasmic portion of the chain corresponds to 624 to 630 (KGTTSKI). The chain crosses the membrane as a helical span at residues 631–646 (MVSVWAFFAVIFLASY). The Extracellular segment spans residues 647 to 817 (TANLAAFMIQ…VMSSQLDIDN (171 aa)). An N-linked (GlcNAc...) asparagine glycan is attached at Asn-688. Residues 690-691 (ST) and Asp-732 contribute to the L-glutamate site. Cys-746 and Cys-801 are disulfide-bonded. The helical transmembrane segment at 818–837 (MAGVFYMLGAAMALSLITFI) threads the bilayer. Topologically, residues 838 to 1482 (CEHLFYWQFR…EKLSSIESDV (645 aa)) are cytoplasmic. Ser-882, Ser-886, Ser-917, and Ser-920 each carry phosphoserine. Tyr-962 and Tyr-1039 each carry phosphotyrosine. Phosphoserine is present on residues Ser-1058, Ser-1061, and Ser-1064. The interval 1074–1097 (EGNAAKRRKQQYKDSLKKRPASAK) is disordered. Tyr-1109 and Tyr-1133 each carry phosphotyrosine. Ser-1143 is modified (phosphoserine). At Tyr-1155 the chain carries Phosphotyrosine. The interval 1162-1194 (FKRDSVSGGGPCTNRSHLKHGTGDKHGVVGGVP) is disordered. Phosphoserine occurs at positions 1255 and 1259. Low complexity predominate over residues 1266–1277 (PAAPVAVSSNAS). The segment at 1266 to 1301 (PAAPVAVSSNASTTKYPQSPTNSKAQKKNRNKLRRQ) is disordered. The span at 1278-1289 (TTKYPQSPTNSK) shows a compositional bias: polar residues. A compositionally biased stretch (basic residues) spans 1290–1301 (AQKKNRNKLRRQ). Residues 1292 to 1304 (KKNRNKLRRQHSY) are interaction with DAPK1. Ser-1303 carries the phosphoserine; by DAPK1 modification. Position 1472 is a phosphotyrosine (Tyr-1472). A PDZ-binding motif is present at residues 1480-1482 (SDV).

This sequence belongs to the glutamate-gated ion channel (TC 1.A.10.1) family. NR2B/GRIN2B subfamily. As to quaternary structure, heterotetramer. Forms heterotetrameric channels composed of two GluN1/zeta subunits (GRIN1), and two identical GluN2/epsilon subunits (GRIN2A, GRIN2B, GRIN2C or GRIN2D) or GluN3 subunits (GRIN3A or GRIN3B) (in vitro). Can also form heterotetrameric channels that contain at least two GluN1 subunits and at least two different GluN2 subunits (or a combination of one GluN2 and one GluN3 subunits) (in vitro). In vivo, the subunit composition may depend on the expression levels of the different subunits. Found in a complex with GRIN1, GRIN3A and PPP2CB. Interacts with MAGI3. Interacts with HIP1 and NETO1. Interacts with PDZ domains of PATJ, DLG3 and DLG4. Interacts with DAPK1. Found in a complex with GRIN1 and PRR7. Interacts with PRR7. Interacts with CAMK2A. Interacts with ARC; preventing ARC oligomerization. Interacts with TMEM25. Interacts (via the extreme C-terminus) with FRMPD2 (via the second PDZ domain); the interaction is direct and is likely to promote NMDAR-mediated neural signal transmission. GRIN2A binds FRMPD2 with lower affinity than GRIN2B. Interacts with FAM81A; the interaction facilitates condensate formation via liquid-liquid phase separation. Phosphorylated on tyrosine residues. Phosphorylation at Ser-1303 by DAPK1 enhances synaptic NMDA receptor channel activity. Detected in brain (at protein level). Detected throughout the brain, and in brain stem trigeminal nucleus. Detected in forebrain.

The protein localises to the cell membrane. Its subcellular location is the postsynaptic cell membrane. It is found in the cell projection. The protein resides in the dendrite. It localises to the late endosome. The protein localises to the lysosome. Its subcellular location is the cytoplasm. It is found in the cytoskeleton. The catalysed reaction is Ca(2+)(in) = Ca(2+)(out). It catalyses the reaction Na(+)(in) = Na(+)(out). It carries out the reaction K(+)(in) = K(+)(out). Its function is as follows. Component of N-methyl-D-aspartate (NMDA) receptors (NMDARs) that function as heterotetrameric, ligand-gated cation channels with high calcium permeability and voltage-dependent block by Mg(2+). Participates in synaptic plasticity for learning and memory formation by contributing to the long-term depression (LTD) of hippocampus membrane currents. Channel activation requires binding of the neurotransmitter L-glutamate to the GluN2 subunit, glycine or D-serine binding to the GluN1 subunit, plus membrane depolarization to eliminate channel inhibition by Mg(2+). NMDARs mediate simultaneously the potasium efflux and the influx of calcium and sodium. Each GluN2 subunit confers differential attributes to channel properties, including activation, deactivation and desensitization kinetics, pH sensitivity, Ca2(+) permeability, and binding to allosteric modulators. In concert with DAPK1 at extrasynaptic sites, acts as a central mediator for stroke damage. Its phosphorylation at Ser-1303 by DAPK1 enhances synaptic NMDA receptor channel activity inducing injurious Ca2+ influx through them, resulting in an irreversible neuronal death. The protein is Glutamate receptor ionotropic, NMDA 2B of Mus musculus (Mouse).